The primary structure comprises 177 residues: Large ribosomal subunit protein uL6 (177 aa).

This sequence belongs to the universal ribosomal protein uL6 family. In terms of assembly, part of the 50S ribosomal subunit.

Functionally, this protein binds to the 23S rRNA, and is important in its secondary structure. It is located near the subunit interface in the base of the L7/L12 stalk, and near the tRNA binding site of the peptidyltransferase center. This chain is Large ribosomal subunit protein uL6, found in Vibrio atlanticus (strain LGP32) (Vibrio splendidus (strain Mel32)).